The chain runs to 244 residues: 5-oxoprolinase subunit A (244 aa).

This sequence belongs to the LamB/PxpA family. As to quaternary structure, forms a complex composed of PxpA, PxpB and PxpC.

The enzyme catalyses 5-oxo-L-proline + ATP + 2 H2O = L-glutamate + ADP + phosphate + H(+). Catalyzes the cleavage of 5-oxoproline to form L-glutamate coupled to the hydrolysis of ATP to ADP and inorganic phosphate. The protein is 5-oxoprolinase subunit A of Shigella flexneri.